The sequence spans 1071 residues: Myosin IF heavy chain (1071 aa).

One can recognise a Myosin motor domain in the interval 40 to 736 (VGLTDMCFLE…TLFHFEELRQ (697 aa)). 134 to 141 (GESGSGKT) serves as a coordination point for ATP. The actin-binding stretch occupies residues 610–632 (INDLIGKLNTCQPHYIRCIKSNE). One can recognise an IQ domain in the interval 739–768 (LPSIVITIQRVWRGYKVRKWYKQELQRLRE). The TH1 domain occupies 870-1069 (SRKKEWDCRR…KGNTAIVYYN (200 aa)).

This sequence belongs to the TRAFAC class myosin-kinesin ATPase superfamily. Myosin family. As to quaternary structure, myosin I heavy chain is single-headed. Dimer of a heavy and a light chain. Inability to self-assemble into filaments.

Functionally, myosin is a protein that binds to actin and has ATPase activity that is activated by actin. In Dictyostelium discoideum (Social amoeba), this protein is Myosin IF heavy chain (myoF).